The following is a 502-amino-acid chain: NAD(P)H-quinone oxidoreductase subunit 2, chloroplastic (502 aa).

Transmembrane regions (helical) follow at residues 15–35, 42–62, 79–99, 108–128, 132–152, 167–187, 210–230, 253–275, 278–298, 307–327, 334–354, 375–395, 413–433, and 468–488; these read VLPEAIIICSSLFILIIDLIF, VLPYMAILGLILSMLSLLFQW, LSIAFRLLIALSSMLCVLLSI, TLSEFLVIFLTATLGAMLLCG, ILMIFLSLETLGLCSYILTGY, LLIGAASSSILLYGFSLLYGL, LASLVALALIIVGISFKIAAA, VSSKAAGLMLATRIMTILFPYII, WHNIFQILAILSMAIGNIIAI, LGYSSIAQAGFLLVGLLAGNI, LVYMLIYLFMNLGAFACVILF, ILALCLSICLLSLGGIPPFGG, LLVFVGLLTSVISIFYYIKII, and ILICVIGTTISGIFVNPIISI.

The protein belongs to the complex I subunit 2 family. As to quaternary structure, NDH is composed of at least 16 different subunits, 5 of which are encoded in the nucleus.

The protein resides in the plastid. Its subcellular location is the chloroplast thylakoid membrane. The enzyme catalyses a plastoquinone + NADH + (n+1) H(+)(in) = a plastoquinol + NAD(+) + n H(+)(out). The catalysed reaction is a plastoquinone + NADPH + (n+1) H(+)(in) = a plastoquinol + NADP(+) + n H(+)(out). Functionally, NDH shuttles electrons from NAD(P)H:plastoquinone, via FMN and iron-sulfur (Fe-S) centers, to quinones in the photosynthetic chain and possibly in a chloroplast respiratory chain. The immediate electron acceptor for the enzyme in this species is believed to be plastoquinone. Couples the redox reaction to proton translocation, and thus conserves the redox energy in a proton gradient. The protein is NAD(P)H-quinone oxidoreductase subunit 2, chloroplastic of Mesostigma viride (Green alga).